A 317-amino-acid polypeptide reads, in one-letter code: Methionyl-tRNA formyltransferase (317 aa).

A (6S)-5,6,7,8-tetrahydrofolate-binding site is contributed by 112-115; the sequence is SILP.

It belongs to the Fmt family.

The catalysed reaction is L-methionyl-tRNA(fMet) + (6R)-10-formyltetrahydrofolate = N-formyl-L-methionyl-tRNA(fMet) + (6S)-5,6,7,8-tetrahydrofolate + H(+). In terms of biological role, attaches a formyl group to the free amino group of methionyl-tRNA(fMet). The formyl group appears to play a dual role in the initiator identity of N-formylmethionyl-tRNA by promoting its recognition by IF2 and preventing the misappropriation of this tRNA by the elongation apparatus. In Actinobacillus succinogenes (strain ATCC 55618 / DSM 22257 / CCUG 43843 / 130Z), this protein is Methionyl-tRNA formyltransferase.